The following is a 764-amino-acid chain: 5-methyltetrahydropteroyltriglutamate--homocysteine methyltransferase (764 aa).

Residues 16-19 and lysine 112 each bind 5-methyltetrahydropteroyltri-L-glutamate; that span reads RELK. Residues 431 to 433 and glutamate 484 contribute to the L-homocysteine site; that span reads IGS. L-methionine contacts are provided by residues 431 to 433 and glutamate 484; that span reads IGS. 5-methyltetrahydropteroyltri-L-glutamate contacts are provided by residues 515–516 and tryptophan 561; that span reads RC. Aspartate 599 is a binding site for L-homocysteine. An L-methionine-binding site is contributed by aspartate 599. Glutamate 605 lines the 5-methyltetrahydropteroyltri-L-glutamate pocket. Zn(2+)-binding residues include histidine 641, cysteine 643, and glutamate 665. Residue histidine 694 is the Proton donor of the active site. Cysteine 726 contacts Zn(2+).

This sequence belongs to the vitamin-B12 independent methionine synthase family. Zn(2+) serves as cofactor.

The catalysed reaction is 5-methyltetrahydropteroyltri-L-glutamate + L-homocysteine = tetrahydropteroyltri-L-glutamate + L-methionine. Its pathway is amino-acid biosynthesis; L-methionine biosynthesis via de novo pathway; L-methionine from L-homocysteine (MetE route): step 1/1. Its function is as follows. Catalyzes the transfer of a methyl group from 5-methyltetrahydrofolate to homocysteine resulting in methionine formation. The polypeptide is 5-methyltetrahydropteroyltriglutamate--homocysteine methyltransferase (Paraburkholderia xenovorans (strain LB400)).